The chain runs to 586 residues: MSTQSNRNALVVAQLKGDFVAFLFVLWKALNLPVPTKCQIDMAKVLANGDNKKFILQAFRGIGKSFITCAFVVWTLWRDPQLKILIVSASKERADLNSIFIKNIIDLLPFLDELKPSPGQRDSVISFDVGPAKPDHSPSVKSVGITGQLTGSRADIIIADDVEIPSNSATQGAREKLWTLVQEFRALLKPLPTSRVIYLGTPQTEMTLYKELEDNRGYTTIIWPALYPRSREEDLYYGERLAPMLREEFNDGFEMLQGQPTDPVRFDMEDLRERELEYGKAGFTLQFMLNPNLSDAEKYPLRLRDAIVCGLDFEKAPMHYQWLPNRQNRNEELPNVGLKGDDIHSYHSCSQNTGQYQQRILVIDPSGRGKDETGYAVLFTLNGYIYLMEAGGFPDGYSDKTLESLAKKANEWKVQTVVFESNFGDGMFGKVFSPVLLKHHAAALEEIRARGMKELRICDTLEPVLSTHRLVIRDEVIREDYQTARDADGKHDVRYSLFYQLTRMAREKGAVAHDDRLDAFRLGVEFLRSTMELDAVKVEAEVLEAFLEEHMEHPIHSAGHVVTAMVDGMELYWEDDDVNGDRFINW.

Residues M1–R229 form an ATPase activity region. The Walker A motif signature appears at A58–S65. The Walker B motif motif lies at I156–D161. The interval H344–G429 is nuclease activity. The Mg(2+) site is built by D364, E420, and D518. Residues L571–W586 are involved in prohead binding.

Belongs to the Teseptimavirus large terminase family. Homopentamer. Interacts with the terminase small subunit; the active complex is probably heterooligomeric. Interacts with the portal protein. Mg(2+) serves as cofactor.

The terminase large subunit acts as an ATP driven molecular motor necessary for viral DNA translocation into empty capsids and as an endonuclease that cuts the viral genome at a unique and precise dsDNA sequence to initiate and to end a packaging reaction. The terminase lies at a unique vertex of the procapsid and is composed of two subunits, a small terminase subunit involved in viral DNA recognition (packaging sequence), and a large terminase subunit possessing endonucleolytic and ATPase activities. Both terminase subunits heterooligomerize and are docked on the portal protein to form the packaging machine. The terminase large subunit exhibits endonuclease activity and cleaves the viral genome concatemer. Once the DNA is packaged, the terminase detaches from the connector and gets replaced by the tail to finish maturation of the virion. The chain is Terminase, large subunit (19) from Escherichia coli (Bacteriophage T3).